The chain runs to 95 residues: Secretoglobin family 2A member 1 (95 aa).

The first 18 residues, 1–18 (MKLVFLFLLVTIPICCYA), serve as a signal peptide directing secretion. N-linked (GlcNAc...) asparagine glycosylation is found at asparagine 35 and asparagine 72.

The protein belongs to the secretoglobin family. Lipophilin subfamily. As to quaternary structure, prostatein is composed of three different peptides called C1, C2 and C3. These form covalent C1:C3 (F) and C2:C3 (S) heterodimers whose non-covalent association forms tetrameric (C1:C3/C3:C2) prostatein molecules. Expressed at very low level in ventral prostate.

It is found in the secreted. Part of prostatein which is the major secretory glycoprotein of ventral prostate gland. Steroid-binding protein; can bind non-polar steroids, cholesterol and a group of small proline-rich peptides. The protein is Secretoglobin family 2A member 1 of Rattus norvegicus (Rat).